A 330-amino-acid polypeptide reads, in one-letter code: Type I restriction enzyme MpnII specificity subunit (330 aa).

This sequence belongs to the type-I restriction system S methylase family. As to quaternary structure, the methyltransferase is composed of M and S polypeptides.

The specificity (S) subunit of a type I restriction enzyme; this subunit dictates DNA sequence specificity. The M and S subunits together form a methyltransferase (MTase) that probably methylates A-2 on the top strand and A-3 on the bottom strand of the sequence 5'-GAN(7)TAY-3'. As the bacterial DNA is methylated on this sequence and this is the only type I methylase in the genome, it is probably responsible for all of the methylation on this site in the genome. The R subunit has multiple frameshifts and is probably not expressed in this bacteria. This Mycoplasma pneumoniae (strain ATCC 29342 / M129 / Subtype 1) (Mycoplasmoides pneumoniae) protein is Type I restriction enzyme MpnII specificity subunit.